The following is a 59-amino-acid chain: Sec-independent protein translocase protein TatA 1 (59 aa).

A helical transmembrane segment spans residues 3–23 (FPLPWQLILILLVILVIFGAS).

This sequence belongs to the TatA/E family. In terms of assembly, forms a complex with TatC.

The protein resides in the cell inner membrane. Its function is as follows. Part of the twin-arginine translocation (Tat) system that transports large folded proteins containing a characteristic twin-arginine motif in their signal peptide across membranes. TatA could form the protein-conducting channel of the Tat system. This chain is Sec-independent protein translocase protein TatA 1, found in Aquifex aeolicus (strain VF5).